The following is a 92-amino-acid chain: Small ribosomal subunit protein bS20 (92 aa).

The segment covering 1-21 has biased composition (basic and acidic residues); that stretch reads MPLHKSAEKRLRQAARRNERN. 2 disordered regions span residues 1-26 and 73-92; these read MPLHKSAEKRLRQAARRNERNRARKK and ASRKKAQLTKALNNYTPTAS. The span at 82-92 shows a compositional bias: polar residues; it reads KALNNYTPTAS.

This sequence belongs to the bacterial ribosomal protein bS20 family.

Its function is as follows. Binds directly to 16S ribosomal RNA. This is Small ribosomal subunit protein bS20 from Chlorobaculum tepidum (strain ATCC 49652 / DSM 12025 / NBRC 103806 / TLS) (Chlorobium tepidum).